A 556-amino-acid polypeptide reads, in one-letter code: Peptide chain release factor 3 (556 aa).

Residues 28-297 enclose the tr-type G domain; sequence QQRRNFAIIS…AFLDYALKPG (270 aa). Residues 37-44, 105-109, and 159-162 contribute to the GTP site; these read SHPDAGKT, DTPGH, and NKMD.

Belongs to the TRAFAC class translation factor GTPase superfamily. Classic translation factor GTPase family. PrfC subfamily.

It localises to the cytoplasm. Its function is as follows. Increases the formation of ribosomal termination complexes and stimulates activities of RF-1 and RF-2. It binds guanine nucleotides and has strong preference for UGA stop codons. It may interact directly with the ribosome. The stimulation of RF-1 and RF-2 is significantly reduced by GTP and GDP, but not by GMP. This Synechococcus elongatus (strain ATCC 33912 / PCC 7942 / FACHB-805) (Anacystis nidulans R2) protein is Peptide chain release factor 3.